We begin with the raw amino-acid sequence, 771 residues long: Protein translocase subunit SecA 2 (771 aa).

ATP contacts are provided by residues glutamine 91, 109-113 (GEGKT), and aspartate 496.

This sequence belongs to the SecA family. As to quaternary structure, monomer and homodimer. Part of the essential Sec protein translocation apparatus which comprises SecA, SecYEG and auxiliary proteins SecDF. Other proteins may also be involved.

It is found in the cell membrane. It localises to the cytoplasm. The enzyme catalyses ATP + H2O + cellular proteinSide 1 = ADP + phosphate + cellular proteinSide 2.. Its function is as follows. Part of the Sec protein translocase complex. Interacts with the SecYEG preprotein conducting channel. Has a central role in coupling the hydrolysis of ATP to the transfer of proteins into and across the cell membrane, serving as an ATP-driven molecular motor driving the stepwise translocation of polypeptide chains across the membrane. The chain is Protein translocase subunit SecA 2 from Corynebacterium jeikeium (strain K411).